A 159-amino-acid polypeptide reads, in one-letter code: 6,7-dimethyl-8-ribityllumazine synthase (159 aa).

5-amino-6-(D-ribitylamino)uracil is bound by residues Phe-23, 58-60, and 82-84; these read AYE and TII. Residue His-90 is the Proton donor of the active site. Residue Leu-115 participates in 5-amino-6-(D-ribitylamino)uracil binding. Residue Arg-129 coordinates (2S)-2-hydroxy-3-oxobutyl phosphate.

The protein belongs to the DMRL synthase family. As to quaternary structure, forms an icosahedral capsid composed of 60 subunits, arranged as a dodecamer of pentamers.

The enzyme catalyses (2S)-2-hydroxy-3-oxobutyl phosphate + 5-amino-6-(D-ribitylamino)uracil = 6,7-dimethyl-8-(1-D-ribityl)lumazine + phosphate + 2 H2O + H(+). The protein operates within cofactor biosynthesis; riboflavin biosynthesis; riboflavin from 2-hydroxy-3-oxobutyl phosphate and 5-amino-6-(D-ribitylamino)uracil: step 1/2. Functionally, catalyzes the formation of 6,7-dimethyl-8-ribityllumazine by condensation of 5-amino-6-(D-ribitylamino)uracil with 3,4-dihydroxy-2-butanone 4-phosphate. This is the penultimate step in the biosynthesis of riboflavin. This chain is 6,7-dimethyl-8-ribityllumazine synthase, found in Blochmanniella floridana.